Here is a 305-residue protein sequence, read N- to C-terminus: uncharacterized protein (305 aa).

This is an uncharacterized protein from Streptomyces griseus.